We begin with the raw amino-acid sequence, 98 residues long: uncharacterized protein (98 aa).

The first 23 residues, 1–23 (MKYVALAFVLSLVILQISAQVGA), serve as a signal peptide directing secretion.

Nacreous layer of shell (at protein level). Expressed primarily in the mantle with highest level in the mantle pallium and lower level in the mantle edge.

It localises to the secreted. This is an uncharacterized protein from Pinctada maxima (Silver-lipped pearl oyster).